Reading from the N-terminus, the 512-residue chain is MFLQTALLLLSLGVAEPDCNTKTATGPYILDRYKPKPVTVSKKLYSATRYTTSAQNELLTAGYRTAWVAYCYNGGLVDSNTGCNARLLHYPPSRDELLLWGSSHQCSYGDICHDCWGSDSYACLGQLDPAKHWAPRKELVRRDANWKFAYHMCNIDWRCGVTTSPVFFNLQWVKNEVKVSTLLPNGSTVEHSAGEPLFWTEKDFSYLVKDNFEIQREEVKISCFVDPDYWVGERKTKKAFCQDGTNFFEVTSHQFCHQYACYNFSKDELLEAVYKERAHEKSKDLPFGNKSWTVVTASIDDLHALSAAQAFELEGLRASFAELDSRFRQLSEILDTVISSIAKIDERLIGRLIKAPVSSRFISEDKFLLHQCVDSVANNTNCVGDSAYVDGRWTHVGDNHPCTTVVDEPIGIDIYNFSALWYPSAAEVDFRGTVQSEDGWSFVVKSKDALIQTMMYTKNGGKGTSLTDLLDYPSGWLKGQLGGLLYGNIGVYLLIAFAFVLLIRLIKSAGLC.

An N-terminal signal peptide occupies residues 1–15 (MFLQTALLLLSLGVA). Residues asparagine 185, asparagine 263, asparagine 289, asparagine 378, and asparagine 416 are each glycosylated (N-linked (GlcNAc...) asparagine; by host). A helical membrane pass occupies residues 479 to 502 (GQLGGLLYGNIGVYLLIAFAFVLL).

The protein localises to the virion membrane. In terms of biological role, attaches the virus to host cellular receptor and later induces fusion of virion with host membrane. This is Envelope glycoprotein from Thogoto virus (isolate SiAr 126) (Tho).